A 406-amino-acid chain; its full sequence is Tryptophan synthase beta chain (406 aa).

Lys99 is subject to N6-(pyridoxal phosphate)lysine.

It belongs to the TrpB family. Tetramer of two alpha and two beta chains. Requires pyridoxal 5'-phosphate as cofactor.

The enzyme catalyses (1S,2R)-1-C-(indol-3-yl)glycerol 3-phosphate + L-serine = D-glyceraldehyde 3-phosphate + L-tryptophan + H2O. The protein operates within amino-acid biosynthesis; L-tryptophan biosynthesis; L-tryptophan from chorismate: step 5/5. In terms of biological role, the beta subunit is responsible for the synthesis of L-tryptophan from indole and L-serine. The protein is Tryptophan synthase beta chain (trpB) of Caulobacter vibrioides (strain ATCC 19089 / CIP 103742 / CB 15) (Caulobacter crescentus).